We begin with the raw amino-acid sequence, 363 residues long: MTVAQIHSDCSSSMLPRHIKDDVEPIHLLGFNIARKPKWLQFVLLSGAIFILYLGYGYMQELIFKLPGMKPFGWTLTLIQFVIYSGCGYAECAVWHNTKRMIPWRIYGVIAFFTVATMGLSNASVGYLNYPTQVIFKCCKLIPVLIGGILIQGKRYGWIDISAAILMSLGIIMFTLADNKVSPNFDSRGYIMISGALLADAVIGNIQEKNMKKYGGSSNEVVLYSYGIGSVFIFTYVVLSGEIFSAIPFFLENSWKTFGYALIFSFLGYLGVNVVLTHIKVFGALVAVTVTTLRKALTIILSFLLFSKPFTIEYVYAGSVVMLAIYLNLYSKNKASWDHMIRIFVARAMGYHAVATKKDPMMV.

A run of 10 helical transmembrane segments spans residues 39–59 (WLQFVLLSGAIFILYLGYGYM), 63–83 (IFKLPGMKPFGWTLTLIQFVI), 106–126 (IYGVIAFFTVATMGLSNASVG), 131–151 (PTQVIFKCCKLIPVLIGGILI), 157–177 (GWIDISAAILMSLGIIMFTLA), 187–206 (SRGYIMISGALLADAVIGNI), 231–251 (VFIFTYVVLSGEIFSAIPFFL), 257–277 (TFGYALIFSFLGYLGVNVVLT), 281–301 (VFGALVAVTVTTLRKALTIIL), and 310–330 (FTIEYVYAGSVVMLAIYLNLY).

This sequence belongs to the nucleotide-sugar transporter family. SLC35B subfamily.

The protein resides in the golgi apparatus membrane. Functionally, mediates the transport of adenosine 3'-phospho 5'-phosphosulfate (PAPS), from cytosol into Golgi. PAPS is a universal sulfuryl donor for sulfation events that take place in the Golgi. This is Adenosine 3'-phospho 5'-phosphosulfate transporter 2 (pst-2) from Caenorhabditis briggsae.